The chain runs to 215 residues: UPF0502 protein YceH (215 aa).

Lysine 80 is modified (N6-acetyllysine).

It belongs to the UPF0502 family.

This is UPF0502 protein YceH from Shigella sonnei (strain Ss046).